An 85-amino-acid polypeptide reads, in one-letter code: MEKMNLLKEITIFDLNKIKPGTKVQVTWYKGTEMEYTHNGEVIINNGEKFYYNYVDKEGYVGHCHVNALDLKNYPDSLIVEIKSK.

This Bacillus subtilis (strain 168) protein is SPbeta prophage-derived uncharacterized protein YoqG (yoqG).